A 427-amino-acid polypeptide reads, in one-letter code: Carboxyl-terminal-processing protease (427 aa).

An N-terminal signal peptide occupies residues 1 to 31 (MGKRTRRFWALAFSLLMGALIYLGNTPSALA). The 83-residue stretch at 104 to 186 (NLQVTTTGEL…TKVSLEILSA (83 aa)) folds into the PDZ domain. Residues S313, D324, and K338 each act as charge relay system in the active site.

The protein belongs to the peptidase S41A family.

It localises to the cellular thylakoid lumen. It carries out the reaction The enzyme shows specific recognition of a C-terminal tripeptide, Xaa-Yaa-Zaa, in which Xaa is preferably Ala or Leu, Yaa is preferably Ala or Tyr, and Zaa is preferably Ala, but then cleaves at a variable distance from the C-terminus. A typical cleavage is -Ala-Ala-|-Arg-Ala-Ala-Lys-Glu-Asn-Tyr-Ala-Leu-Ala-Ala.. Functionally, cleavage of the 16 C-terminal residues from the D1 precursor of photosystem II (PSII). This proteolytic processing is necessary to allow the light-driven assembly of the oxygen-evolving cluster (a tetranuclear manganese), which is responsible for photosynthetic water oxidation. This chain is Carboxyl-terminal-processing protease (ctpA), found in Synechocystis sp. (strain ATCC 27184 / PCC 6803 / Kazusa).